The chain runs to 715 residues: MNSSSSHRNILVTSALPYANGPIHLGHVLEGIQTDIWVRFQKAIGNECYFFCADDTHGTPVMLAARKEGITPEQLIERVGQEHYRDLTSFGIEYDHYDSTHSKANQEISKDIYLKLKSKGHISRRSIEQSYCETDKMFLPDRFIKGTCPNCKSKDQYGDNCEVCGATYSPKDLIDSHCSLCGTSPVVKNSDHIFFKLGDFHKKDEKSTSLETINPSHLKTDFDLQSWIETSGVVSESEGVKKKLKEWFDAGLQDWDISRDGPYFGFEIPDETNKYFYVWLDAPIGYMASSKNFFEKNFPNEPNKFDSFWKNKNSEIVHFIGKDILYFHTLFWPAMLEGSDYRAPSKVHVHGFIGVNGEKMSKSRGTFIKAETFVKYLDPEHLRFYLASKLGPGMDDIDLSFEDFINKVNSDLVGNLINSVSRVSTTILDALDRTLGVVSKEGLALIEEILYQTVKFGPGEDSIQNIIKYAYDQRNYAKVLREITRLGDRVNRYVNDNAPWKLIKENPEKAREVVTVTLNASRFLAIYLYPVVPKISEQIYKLLNLQDSPSFKDLDKNRILENIKVLPYEMISKRVDEKAIKVMLEENKQSEHSKKVETSENPVPEERLEISIDDLSKVELRVGQIVEAGPVDGADKLVNVKVDLGELGIKNVFAGIKVAYQPENLKGLKVVVVANLKPRKMKFGISEAMLLASGEGESLSLFIPHKDAKPGDRLK.

A 'HIGH' region motif is present at residues 17–27; that stretch reads PYANGPIHLGH. Residues Cys-148, Cys-151, Cys-161, and Cys-164 each coordinate Zn(2+). A 'KMSKS' region motif is present at residues 359–363; the sequence is KMSKS. Lys-362 is an ATP binding site. The 102-residue stretch at 614 to 715 folds into the tRNA-binding domain; that stretch reads DLSKVELRVG…KDAKPGDRLK (102 aa).

The protein belongs to the class-I aminoacyl-tRNA synthetase family. MetG type 1 subfamily. In terms of assembly, homodimer. Requires Zn(2+) as cofactor.

The protein localises to the cytoplasm. The catalysed reaction is tRNA(Met) + L-methionine + ATP = L-methionyl-tRNA(Met) + AMP + diphosphate. In terms of biological role, is required not only for elongation of protein synthesis but also for the initiation of all mRNA translation through initiator tRNA(fMet) aminoacylation. This chain is Methionine--tRNA ligase, found in Leptospira interrogans serogroup Icterohaemorrhagiae serovar copenhageni (strain Fiocruz L1-130).